A 478-amino-acid polypeptide reads, in one-letter code: UDP-N-acetylmuramate--L-alanine ligase (478 aa).

Residue 126–132 (GTHGKTT) coordinates ATP.

This sequence belongs to the MurCDEF family.

The protein resides in the cytoplasm. It catalyses the reaction UDP-N-acetyl-alpha-D-muramate + L-alanine + ATP = UDP-N-acetyl-alpha-D-muramoyl-L-alanine + ADP + phosphate + H(+). The protein operates within cell wall biogenesis; peptidoglycan biosynthesis. Functionally, cell wall formation. The polypeptide is UDP-N-acetylmuramate--L-alanine ligase (Synechococcus sp. (strain JA-2-3B'a(2-13)) (Cyanobacteria bacterium Yellowstone B-Prime)).